The primary structure comprises 365 residues: AP2/ERF and B3 domain-containing protein Os01g0141000 (365 aa).

Positions 1–24 (MGVVSFSSTSSGASTATTESGGAV) are disordered. Positions 68–123 (RYKGVVPQPNGRWGAQIYERHARVWLGTFPDEEAAARAYDVAALRYRGRDAATNFP) form a DNA-binding region, AP2/ERF. The TF-B3 DNA-binding region spans 182–294 (FEKAVTPSDV…KLLFIDCKKN (113 aa)).

It is found in the nucleus. The protein is AP2/ERF and B3 domain-containing protein Os01g0141000 of Oryza sativa subsp. japonica (Rice).